The chain runs to 132 residues: L-ectoine synthase (132 aa).

Belongs to the ectoine synthase family.

The catalysed reaction is (2S)-4-acetamido-2-aminobutanoate = L-ectoine + H2O. Its pathway is amine and polyamine biosynthesis; ectoine biosynthesis; L-ectoine from L-aspartate 4-semialdehyde: step 3/3. In terms of biological role, catalyzes the circularization of gamma-N-acetyl-alpha,gamma-diaminobutyric acid (ADABA) to ectoine (1,4,5,6-tetrahydro-2-methyl-4-pyrimidine carboxylic acid), which is an excellent osmoprotectant. The polypeptide is L-ectoine synthase (Rhodococcus opacus (strain B4)).